The primary structure comprises 254 residues: Zinc import ATP-binding protein ZnuC (254 aa).

Residues 5–221 (ICAADLSVSH…PAYRALFGSE (217 aa)) enclose the ABC transporter domain. 38–45 (GPNGSGKS) contributes to the ATP binding site. Residues 234–245 (DHDHDHVAEGHR) show a composition bias toward basic and acidic residues. The disordered stretch occupies residues 234–254 (DHDHDHVAEGHRHGPACAHPH).

Belongs to the ABC transporter superfamily. Zinc importer (TC 3.A.1.15.5) family. The complex is composed of two ATP-binding proteins (ZnuC), two transmembrane proteins (ZnuB) and a solute-binding protein (ZnuA).

The protein localises to the cell inner membrane. It catalyses the reaction Zn(2+)(out) + ATP(in) + H2O(in) = Zn(2+)(in) + ADP(in) + phosphate(in) + H(+)(in). Functionally, part of the ABC transporter complex ZnuABC involved in zinc import. Responsible for energy coupling to the transport system. The sequence is that of Zinc import ATP-binding protein ZnuC from Paracoccus denitrificans (strain Pd 1222).